Here is a 385-residue protein sequence, read N- to C-terminus: Putative type I restriction enzyme specificity subunit S.HindORF215P (385 aa).

It belongs to the type-I restriction system S methylase family.

Functionally, a putative specificity subunit for a type I restriction enzyme; the corresponding endonuclease and methylase subunits have multiple frameshifts and are probably not expressed. The polypeptide is Putative type I restriction enzyme specificity subunit S.HindORF215P (Haemophilus influenzae (strain ATCC 51907 / DSM 11121 / KW20 / Rd)).